The following is a 239-amino-acid chain: Ribonuclease P protein component 3 (239 aa).

The protein belongs to the eukaryotic/archaeal RNase P protein component 3 family. As to quaternary structure, consists of a catalytic RNA component and at least 4-5 protein subunits.

Its subcellular location is the cytoplasm. It carries out the reaction Endonucleolytic cleavage of RNA, removing 5'-extranucleotides from tRNA precursor.. In terms of biological role, part of ribonuclease P, a protein complex that generates mature tRNA molecules by cleaving their 5'-ends. In Methanosarcina barkeri (strain Fusaro / DSM 804), this protein is Ribonuclease P protein component 3.